The primary structure comprises 627 residues: MDLISVLPSTSKSCVCLHKPLSSSTHKLKPFCRTIRILGMPRPRKSVLMASSMSMSVNTLVSDDDIQRRTGGYHSNLWNDDVIQFLSTPYGELAYRERGERLIDEVREIFSSMSLEDGEFSDLIQRLWMVDNVERLGIDRHFKNEIKSALDYVYSYWSEKGIGCGTKSIITNLNSTALGFRTLRLHGYPVSADVLKHFRNQIGQFVSCPSETEEDIRSIVNLYRASLIAFPGEKVMEEAERFSEKYLKETLQKIPDCSLSREIGDVLEHGWHTNLPRLEARNYIDVFGQDTKNMESNRKTEKLLELAKLEFNIFQSIQKTELESLLRWWNDSGSPQITFTRHRHVEYYTLASCIAFEPQHSGFRLGFAKACHIITVLDDMYDLFGTVDELKLFTAAIKRWDPSATDCLPQYMKGIYMMVYNTVNEMSAEAQKAQGRDTLNYARQAWEVYLDSYMQEAKWIATGYLPTFEEYLENGKVSSGHRVSALQPMLTMDIPFPPHILKEVDFPSNLNDLACAILRLRGDTRCYQEDRARGEETSCISCYMKDNPGATEEDALNHLNVMISGVIKGLNWELLKPDSGVPISSKKINFDITRAFHYGYKYRDGYSVSSVETKSLVMRTLLEPVPL.

The N-terminal 50 residues, 1-50, are a transit peptide targeting the chloroplast; the sequence is MDLISVLPSTSKSCVCLHKPLSSSTHKLKPFCRTIRILGMPRPRKSVLMA. Mg(2+)-binding residues include D378, D382, and D530. The DDXXD motif motif lies at 378 to 382; that stretch reads DDMYD.

The protein belongs to the terpene synthase family. Tpsd subfamily. The cofactor is Mg(2+). Mn(2+) serves as cofactor.

It localises to the plastid. It is found in the chloroplast. It carries out the reaction (2E)-geranyl diphosphate = (1S,5S)-beta-pinene + diphosphate. The catalysed reaction is (2E)-geranyl diphosphate = (1S,5S)-alpha-pinene + diphosphate. Its pathway is terpene metabolism; oleoresin biosynthesis. It functions in the pathway secondary metabolite biosynthesis; terpenoid biosynthesis. Monoterpene synthase (TPS) involved in the biosynthesis of monoterpene natural products included in conifer oleoresin secretions and volatile emissions; these compounds contribute to biotic and abiotic stress defense against herbivores and pathogens. Catalyzes the conversion of (2E)-geranyl diphosphate (GPP) to (-)-beta-pinene and, to a lower extent, to (-)-alpha-pinene. In Pinus contorta (Shore pine), this protein is (-)-beta-pinene synthase 1, chloroplastic.